Here is a 214-residue protein sequence, read N- to C-terminus: Thymidylate kinase (214 aa).

11 to 18 (GPEGAGKT) is a binding site for ATP.

Belongs to the thymidylate kinase family.

The catalysed reaction is dTMP + ATP = dTDP + ADP. Functionally, phosphorylation of dTMP to form dTDP in both de novo and salvage pathways of dTTP synthesis. The protein is Thymidylate kinase of Leuconostoc citreum (strain KM20).